The sequence spans 261 residues: Ribonuclease HII (261 aa).

In terms of domain architecture, RNase H type-2 spans 71-259 (KYIAGVDEVG…VKEAKLHFDS (189 aa)). A divalent metal cation-binding residues include Asp-77, Glu-78, and Asp-169.

This sequence belongs to the RNase HII family. The cofactor is Mn(2+). Mg(2+) is required as a cofactor.

Its subcellular location is the cytoplasm. It catalyses the reaction Endonucleolytic cleavage to 5'-phosphomonoester.. Endonuclease that specifically degrades the RNA of RNA-DNA hybrids. In Listeria monocytogenes serotype 4b (strain F2365), this protein is Ribonuclease HII.